A 406-amino-acid chain; its full sequence is 4-hydroxy-3-methylbut-2-en-1-yl diphosphate synthase (ferredoxin) (406 aa).

The [4Fe-4S] cluster site is built by Cys314, Cys317, Cys348, and Glu355.

It belongs to the IspG family. It depends on [4Fe-4S] cluster as a cofactor.

The enzyme catalyses (2E)-4-hydroxy-3-methylbut-2-enyl diphosphate + 2 oxidized [2Fe-2S]-[ferredoxin] + H2O = 2-C-methyl-D-erythritol 2,4-cyclic diphosphate + 2 reduced [2Fe-2S]-[ferredoxin] + H(+). It functions in the pathway isoprenoid biosynthesis; isopentenyl diphosphate biosynthesis via DXP pathway; isopentenyl diphosphate from 1-deoxy-D-xylulose 5-phosphate: step 5/6. Functionally, converts 2C-methyl-D-erythritol 2,4-cyclodiphosphate (ME-2,4cPP) into 1-hydroxy-2-methyl-2-(E)-butenyl 4-diphosphate. This Prochlorococcus marinus (strain MIT 9313) protein is 4-hydroxy-3-methylbut-2-en-1-yl diphosphate synthase (ferredoxin).